A 186-amino-acid polypeptide reads, in one-letter code: Intraflagellar transport protein 27 homolog (186 aa).

Residues 12 to 19 (GDPAVGKT), 64 to 68 (DSAGK), and 123 to 126 (TKTD) contribute to the GTP site.

Belongs to the small GTPase superfamily. Rab family. Component of the IFT complex B, at least composed of IFT20, IFT22, IFT25, IFT27, IFT46, IFT52, TRAF3IP1/IFT54, IFT57, IFT74, IFT80, IFT81, and IFT88. Interacts with IFT25. Interacts with IFT70B. Interacts with RABL2/RABL2A; binding is equal in the presence of GTP or GDP. Interacts with IFT88. Interacts with ARL6; recognizes and binds with the GTP-free form of ARL6. In terms of tissue distribution, expressed predominantly in the testis (at protein level). Co-localizes with RABL2/RABL2A in the midpiece of elongated spermatids within the testis (at protein level).

The protein resides in the cell projection. It is found in the cilium. It localises to the cytoplasm. The protein localises to the flagellum. In terms of biological role, small GTPase-like component of the intraflagellar transport (IFT) complex B that promotes the exit of the BBSome complex from cilia via its interaction with ARL6. Not involved in entry of the BBSome complex into cilium. Prevents aggregation of GTP-free ARL6. Required for hedgehog signaling. Forms a subcomplex within the IFT complex B with IFT25. Its role in intraflagellar transport is mainly seen in tissues rich in ciliated cells such as kidney and testis. Essential for male fertility, spermiogenesis and sperm flagella formation. Plays a role in the early development of the kidney. May be involved in the regulation of ureteric bud initiation. In Mus musculus (Mouse), this protein is Intraflagellar transport protein 27 homolog (Ift27).